A 215-amino-acid chain; its full sequence is Protein-L-isoaspartate O-methyltransferase (215 aa).

The active site involves Ser-62.

It belongs to the methyltransferase superfamily. L-isoaspartyl/D-aspartyl protein methyltransferase family.

It localises to the cytoplasm. The catalysed reaction is [protein]-L-isoaspartate + S-adenosyl-L-methionine = [protein]-L-isoaspartate alpha-methyl ester + S-adenosyl-L-homocysteine. In terms of biological role, catalyzes the methyl esterification of L-isoaspartyl residues in peptides and proteins that result from spontaneous decomposition of normal L-aspartyl and L-asparaginyl residues. It plays a role in the repair and/or degradation of damaged proteins. In Ruegeria sp. (strain TM1040) (Silicibacter sp.), this protein is Protein-L-isoaspartate O-methyltransferase.